The sequence spans 178 residues: Large ribosomal subunit protein uL6 (178 aa).

It belongs to the universal ribosomal protein uL6 family. In terms of assembly, part of the 50S ribosomal subunit.

In terms of biological role, this protein binds to the 23S rRNA, and is important in its secondary structure. It is located near the subunit interface in the base of the L7/L12 stalk, and near the tRNA binding site of the peptidyltransferase center. The chain is Large ribosomal subunit protein uL6 from Streptococcus pneumoniae serotype 4 (strain ATCC BAA-334 / TIGR4).